Consider the following 22-residue polypeptide: Sex pheromone inhibitor determinant (22 aa).

Positions 1–14 (MSKRAMKKIIPLIT) are excised as a propeptide.

It is found in the secreted. Acts as a competitive inhibitor of the CAD1 pheromone. This is Sex pheromone inhibitor determinant (iad) from Enterococcus faecalis (strain ATCC 700802 / V583).